Here is a 444-residue protein sequence, read N- to C-terminus: 3-phosphoshikimate 1-carboxyvinyltransferase (444 aa).

3-phosphoshikimate contacts are provided by Lys-24, Ser-25, and Arg-29. Position 24 (Lys-24) interacts with phosphoenolpyruvate. Positions 97 and 125 each coordinate phosphoenolpyruvate. Residues Ser-170, Gln-172, Asp-318, and Lys-345 each contribute to the 3-phosphoshikimate site. Position 172 (Gln-172) interacts with phosphoenolpyruvate. Residue Asp-318 is the Proton acceptor of the active site. Residues Arg-349 and Arg-391 each contribute to the phosphoenolpyruvate site.

This sequence belongs to the EPSP synthase family. In terms of assembly, monomer.

Its subcellular location is the cytoplasm. The catalysed reaction is 3-phosphoshikimate + phosphoenolpyruvate = 5-O-(1-carboxyvinyl)-3-phosphoshikimate + phosphate. It functions in the pathway metabolic intermediate biosynthesis; chorismate biosynthesis; chorismate from D-erythrose 4-phosphate and phosphoenolpyruvate: step 6/7. Catalyzes the transfer of the enolpyruvyl moiety of phosphoenolpyruvate (PEP) to the 5-hydroxyl of shikimate-3-phosphate (S3P) to produce enolpyruvyl shikimate-3-phosphate and inorganic phosphate. This is 3-phosphoshikimate 1-carboxyvinyltransferase from Halorhodospira halophila (strain DSM 244 / SL1) (Ectothiorhodospira halophila (strain DSM 244 / SL1)).